Reading from the N-terminus, the 405-residue chain is DNA polymerase processivity factor (405 aa).

The tract at residues 354–376 is disordered; the sequence is GAGVKRRASEEEESDQPPKKLFP. The short motif at 358-373 is the Bipartite nuclear localization signal element; that stretch reads KRRASEEEESDQPPKK.

The protein belongs to the herpesviridae DNA polymerase processivity factor family. In terms of assembly, interacts with the DNA polymerase catalytic subunit. Interacts with the origin-binding protein.

It is found in the host nucleus. Plays an essential role in viral DNA replication by acting as the polymerase accessory subunit. Associates with the viral polymerase to increase its processivity and forms high-affinity direct interactions with DNA. Facilitates the origin-binding protein loading onto DNA thus increasing its ability to assemble into a functional complex capable of unwinding duplex DNA. The polypeptide is DNA polymerase processivity factor (Equine herpesvirus 1 (strain Ab4p) (EHV-1)).